Consider the following 327-residue polypeptide: GMP reductase (327 aa).

The Thioimidate intermediate role is filled by Cys175. Ile204–Val227 contacts NADP(+).

Belongs to the IMPDH/GMPR family. GuaC type 2 subfamily.

It catalyses the reaction IMP + NH4(+) + NADP(+) = GMP + NADPH + 2 H(+). Its function is as follows. Catalyzes the irreversible NADPH-dependent deamination of GMP to IMP. It functions in the conversion of nucleobase, nucleoside and nucleotide derivatives of G to A nucleotides, and in maintaining the intracellular balance of A and G nucleotides. This is GMP reductase from Bacillus cereus (strain ZK / E33L).